A 186-amino-acid polypeptide reads, in one-letter code: MTYRCLLPMVLLLCFSTTALSRSYSLLRFQQRRSAEVCQKLLGQLHSTPQHCLEAKMDFQVPEEMNQAQQFRKEDAILVIYEMLQQIFNILTRDFSSTGWSETIIEDLLVELYGQMNRLQPIQKEIMQEQNFTMGDTTVLHLKKYYFNLVQYLESKEYNRCAWTVVRVQILTNFSFLMRLTASLRD.

Residues 1–21 (MTYRCLLPMVLLLCFSTTALS) form the signal peptide. A disulfide bond links Cys52 and Cys161. Residues Asn131 and Asn173 are each glycosylated (N-linked (GlcNAc...) asparagine).

It belongs to the alpha/beta interferon family. Monomer.

It is found in the secreted. Has antiviral, antibacterial and anticancer activities. This is Interferon beta-3 (IFNB3) from Bos taurus (Bovine).